The chain runs to 584 residues: Protein spire homolog 1 (584 aa).

The tract at residues 1 to 30 is disordered; sequence MANTVEADGSNDEGYEAAEEGPEDEEDEKR. Positions 1-73 constitute a KIND domain; that stretch reads MANTVEADGS…RALFAETMEL (73 aa). Residues 9–28 show a composition bias toward acidic residues; sequence GSNDEGYEAAEEGPEDEEDE. A coiled-coil region spans residues 71 to 99; the sequence is MELHTFLAKVKSAKENLKKIQEMEKSDES. WH2 domains lie at 147-165 and 211-228; these read PYEM…LRKV and LHER…LRPV. Residues 224 to 238 show a composition bias toward basic and acidic residues; that stretch reads KLRPVSPEEIRRSRL. The tract at residues 224-366 is disordered; sequence KLRPVSPEEI…PTNVRQFLPP (143 aa). Position 229 is a phosphoserine (Ser229). A compositionally biased stretch (polar residues) spans 242 to 272; that stretch reads TPESTKNLMESSMVNGGLTSQTKENGLSSAE. Residues Ser292, Ser293, and Ser295 each carry the phosphoserine modification. Residues 302–320 show a composition bias toward low complexity; sequence KSTSSSSVSPSFPEEPVLE. Thr337 carries the phosphothreonine modification. Positions 340 to 356 are enriched in basic and acidic residues; the sequence is PERRQPPQRRHSIEKET. The segment covering 357 to 366 has biased composition (polar residues); sequence PTNVRQFLPP. Residues 384–404 form a spir-box region; that stretch reads LALTVEEVMHIRQVLVKAELE. Phosphoserine is present on residues Ser506, Ser510, and Ser563.

The protein belongs to the spire family. As to quaternary structure, interacts with FMN2.

The protein resides in the cytoplasm. It localises to the cytoskeleton. The protein localises to the cytosol. It is found in the cleavage furrow. Its subcellular location is the perinuclear region. The protein resides in the cell membrane. It localises to the cytoplasmic vesicle membrane. In terms of biological role, acts as an actin nucleation factor, remains associated with the slow-growing pointed end of the new filament. Involved in intracellular vesicle transport along actin fibers, providing a novel link between actin cytoskeleton dynamics and intracellular transport. Required for asymmetric spindle positioning and asymmetric cell division during meiosis. Required for normal formation of the cleavage furrow and for polar body extrusion during female germ cell meiosis. Also acts in the nucleus: together with FMN2, promotes assembly of nuclear actin filaments in response to DNA damage in order to facilitate movement of chromatin and repair factors after DNA damage. In addition, promotes innate immune signaling downstream of dsRNA sensing. Mechanistically, contributes to IRF3 phosphorylation and activation downstream of MAVS and upstream of TBK1. In Macaca fascicularis (Crab-eating macaque), this protein is Protein spire homolog 1 (SPIRE1).